Here is a 466-residue protein sequence, read N- to C-terminus: Cysteine--tRNA ligase (466 aa).

Cysteine 28 is a Zn(2+) binding site. A 'HIGH' region motif is present at residues 30-40; the sequence is PTVYNYIHIGN. Zn(2+) contacts are provided by cysteine 208, histidine 233, and glutamate 237. A 'KMSKS' region motif is present at residues 265-269; the sequence is KMSKS. Lysine 268 contacts ATP.

This sequence belongs to the class-I aminoacyl-tRNA synthetase family. In terms of assembly, monomer. Zn(2+) serves as cofactor.

It is found in the cytoplasm. The catalysed reaction is tRNA(Cys) + L-cysteine + ATP = L-cysteinyl-tRNA(Cys) + AMP + diphosphate. The protein is Cysteine--tRNA ligase of Staphylococcus saprophyticus subsp. saprophyticus (strain ATCC 15305 / DSM 20229 / NCIMB 8711 / NCTC 7292 / S-41).